Consider the following 384-residue polypeptide: Probable fructokinase-6, chloroplastic (384 aa).

A chloroplast-targeting transit peptide spans 1–46 (MALQATTTTFCFSGPTFRSTPHSLTSKRPISIKATTSSPSRLSNSR). Positions 34–61 (ATTSSPSRLSNSRSNLKGRALSSDGSTQ) are disordered. Positions 35 to 48 (TTSSPSRLSNSRSN) are enriched in low complexity.

It belongs to the carbohydrate kinase PfkB family.

It localises to the plastid. Its subcellular location is the chloroplast. The catalysed reaction is D-fructose + ATP = D-fructose 6-phosphate + ADP + H(+). It participates in glycan biosynthesis; starch biosynthesis. In terms of biological role, may play an important role in maintaining the flux of carbon towards starch formation. This is Probable fructokinase-6, chloroplastic from Arabidopsis thaliana (Mouse-ear cress).